Reading from the N-terminus, the 171-residue chain is S-ribosylhomocysteine lyase (171 aa).

3 residues coordinate Fe cation: His-54, His-58, and Cys-128.

It belongs to the LuxS family. In terms of assembly, homodimer. It depends on Fe cation as a cofactor.

It catalyses the reaction S-(5-deoxy-D-ribos-5-yl)-L-homocysteine = (S)-4,5-dihydroxypentane-2,3-dione + L-homocysteine. Involved in the synthesis of autoinducer 2 (AI-2) which is secreted by bacteria and is used to communicate both the cell density and the metabolic potential of the environment. The regulation of gene expression in response to changes in cell density is called quorum sensing. Catalyzes the transformation of S-ribosylhomocysteine (RHC) to homocysteine (HC) and 4,5-dihydroxy-2,3-pentadione (DPD). The chain is S-ribosylhomocysteine lyase from Proteus mirabilis (strain HI4320).